The following is a 102-amino-acid chain: ATP-dependent Clp protease adapter protein ClpS (102 aa).

Basic and acidic residues predominate over residues 1 to 18; it reads MSQFDHQHLSDTEEKQEL. The disordered stretch occupies residues 1–21; sequence MSQFDHQHLSDTEEKQELKPP.

It belongs to the ClpS family. Binds to the N-terminal domain of the chaperone ClpA.

In terms of biological role, involved in the modulation of the specificity of the ClpAP-mediated ATP-dependent protein degradation. This Idiomarina loihiensis (strain ATCC BAA-735 / DSM 15497 / L2-TR) protein is ATP-dependent Clp protease adapter protein ClpS.